Here is a 407-residue protein sequence, read N- to C-terminus: Peptidase T (407 aa).

H78 is a binding site for Zn(2+). D80 is an active-site residue. D139 serves as a coordination point for Zn(2+). E173 serves as the catalytic Proton acceptor. E174, D196, and H378 together coordinate Zn(2+).

This sequence belongs to the peptidase M20B family. Requires Zn(2+) as cofactor.

Its subcellular location is the cytoplasm. It carries out the reaction Release of the N-terminal residue from a tripeptide.. Cleaves the N-terminal amino acid of tripeptides. In Shewanella halifaxensis (strain HAW-EB4), this protein is Peptidase T.